The chain runs to 363 residues: Glutamate 5-kinase (363 aa).

ATP is bound at residue K6. Substrate contacts are provided by S46, D133, and N145. ATP-binding positions include T165–D166 and T207–K213. Residues H271 to T349 form the PUA domain.

Belongs to the glutamate 5-kinase family.

Its subcellular location is the cytoplasm. The enzyme catalyses L-glutamate + ATP = L-glutamyl 5-phosphate + ADP. It participates in amino-acid biosynthesis; L-proline biosynthesis; L-glutamate 5-semialdehyde from L-glutamate: step 1/2. Functionally, catalyzes the transfer of a phosphate group to glutamate to form L-glutamate 5-phosphate. This is Glutamate 5-kinase from Deinococcus radiodurans (strain ATCC 13939 / DSM 20539 / JCM 16871 / CCUG 27074 / LMG 4051 / NBRC 15346 / NCIMB 9279 / VKM B-1422 / R1).